We begin with the raw amino-acid sequence, 267 residues long: Integral membrane protein 2C (267 aa).

The residue at position 37 (T37) is a Phosphothreonine. A helical; Signal-anchor for type II membrane protein membrane pass occupies residues 55–75 (VGGVCYLSMGMVVLLMGLVFA). A BRICHOS domain is found at 136–230 (FGGGDPADII…LCNGKDTYRL (95 aa)). Cysteines 163 and 222 form a disulfide. N169 is a glycosylation site (N-linked (GlcNAc...) asparagine).

It belongs to the ITM2 family. In terms of assembly, interacts with BACE1. Interacts with APP. Interacts with STMN2. Post-translationally, type I membrane-bound, as well as soluble, furin has a pre-eminent role in ITM2C proteolytic processing. PCSK7 and PCSK5 may also be involved although to a lesser extent. The soluble form of PCSK7 is incapable of processing ITM2C. Fails to undergo shedding by ADAM10 and intramembrane cleavage by SPPL2B.

It is found in the lysosome membrane. The protein resides in the cell membrane. In terms of biological role, negative regulator of amyloid-beta peptide production. May inhibit the processing of APP by blocking its access to alpha- and beta-secretase. Binding to the beta-secretase-cleaved APP C-terminal fragment is negligible, suggesting that ITM2C is a poor gamma-secretase cleavage inhibitor. May play a role in TNF-induced cell death and neuronal differentiation. The polypeptide is Integral membrane protein 2C (ITM2C) (Pongo abelii (Sumatran orangutan)).